We begin with the raw amino-acid sequence, 311 residues long: p-hydroxybenzoic acid efflux pump subunit AaeA (311 aa).

The chain crosses the membrane as a helical span at residues 11 to 31; that stretch reads IGITLLVVLLAVIAIFKVWAF.

This sequence belongs to the membrane fusion protein (MFP) (TC 8.A.1) family.

The protein resides in the cell inner membrane. Its function is as follows. Forms an efflux pump with AaeB. The chain is p-hydroxybenzoic acid efflux pump subunit AaeA from Yersinia enterocolitica serotype O:8 / biotype 1B (strain NCTC 13174 / 8081).